A 436-amino-acid polypeptide reads, in one-letter code: 3-ketoacyl-CoA thiolase (436 aa).

Residue Cys-99 is the Acyl-thioester intermediate of the active site. Active-site proton acceptor residues include His-392 and Cys-422.

It belongs to the thiolase-like superfamily. Thiolase family. In terms of assembly, heterotetramer of two alpha chains (FadJ) and two beta chains (FadI).

It localises to the cytoplasm. The enzyme catalyses an acyl-CoA + acetyl-CoA = a 3-oxoacyl-CoA + CoA. Its pathway is lipid metabolism; fatty acid beta-oxidation. In terms of biological role, catalyzes the final step of fatty acid oxidation in which acetyl-CoA is released and the CoA ester of a fatty acid two carbons shorter is formed. In Pseudoalteromonas translucida (strain TAC 125), this protein is 3-ketoacyl-CoA thiolase.